The sequence spans 28 residues: Fibrinogen alpha chain (28 aa).

Residue Ser-3 is modified to Phosphoserine.

Heterohexamer; disulfide linked. Contains 2 sets of 3 non-identical chains (alpha, beta and gamma). The 2 heterotrimers are in head to head conformation with the N-termini in a small central domain. Post-translationally, conversion of fibrinogen to fibrin is triggered by thrombin, which cleaves fibrinopeptides A and B from alpha and beta chains, and thus exposes the N-terminal polymerization sites responsible for the formation of the soft clot. The soft clot is converted into the hard clot by factor XIIIA which catalyzes the epsilon-(gamma-glutamyl)lysine cross-linking between gamma chains (stronger) and between alpha chains (weaker) of different monomers. In terms of processing, forms F13A-mediated cross-links between a glutamine and the epsilon-amino group of a lysine residue, forming fibronectin-fibrinogen heteropolymers.

Its subcellular location is the secreted. Its function is as follows. Cleaved by the protease thrombin to yield monomers which, together with fibrinogen beta (FGB) and fibrinogen gamma (FGG), polymerize to form an insoluble fibrin matrix. Fibrin has a major function in hemostasis as one of the primary components of blood clots. In addition, functions during the early stages of wound repair to stabilize the lesion and guide cell migration during re-epithelialization. Was originally thought to be essential for platelet aggregation, based on in vitro studies using anticoagulated blood. However, subsequent studies have shown that it is not absolutely required for thrombus formation in vivo. Enhances expression of SELP in activated platelets via an ITGB3-dependent pathway. Maternal fibrinogen is essential for successful pregnancy. Fibrin deposition is also associated with infection, where it protects against IFNG-mediated hemorrhage. May also facilitate the immune response via both innate and T-cell mediated pathways. This Canis lupus familiaris (Dog) protein is Fibrinogen alpha chain (FGA).